Consider the following 668-residue polypeptide: UvrABC system protein B (668 aa).

In terms of domain architecture, Helicase ATP-binding spans 25-414 (RGLHAGARFQ…IVEQLIRPTG (390 aa)). Residue 38 to 45 (GVTGSGKT) participates in ATP binding. Positions 91–114 (YYDYYQPESYVPARDLYIEKDASI) match the Beta-hairpin motif. In terms of domain architecture, Helicase C-terminal spans 431–594 (DICQRVKACS…TIKKSIEDIL (164 aa)). Residues 627–662 (KKMVQALRLHMKVCARELRFEEAALIRDKILQLQRQ) form the UVR domain.

Belongs to the UvrB family. As to quaternary structure, forms a heterotetramer with UvrA during the search for lesions. Interacts with UvrC in an incision complex.

It is found in the cytoplasm. In terms of biological role, the UvrABC repair system catalyzes the recognition and processing of DNA lesions. A damage recognition complex composed of 2 UvrA and 2 UvrB subunits scans DNA for abnormalities. Upon binding of the UvrA(2)B(2) complex to a putative damaged site, the DNA wraps around one UvrB monomer. DNA wrap is dependent on ATP binding by UvrB and probably causes local melting of the DNA helix, facilitating insertion of UvrB beta-hairpin between the DNA strands. Then UvrB probes one DNA strand for the presence of a lesion. If a lesion is found the UvrA subunits dissociate and the UvrB-DNA preincision complex is formed. This complex is subsequently bound by UvrC and the second UvrB is released. If no lesion is found, the DNA wraps around the other UvrB subunit that will check the other stand for damage. The protein is UvrABC system protein B of Treponema pallidum (strain Nichols).